Reading from the N-terminus, the 388-residue chain is Succinate--CoA ligase [ADP-forming] subunit beta (388 aa).

The ATP-grasp domain occupies 9 to 244 (KEILRKYNVP…LDEEDPAEIE (236 aa)). ATP-binding positions include K46, 53-55 (GRG), E99, A102, and E107. N199 and D213 together coordinate Mg(2+). Substrate is bound by residues N264 and 321 to 323 (GIM).

It belongs to the succinate/malate CoA ligase beta subunit family. Heterotetramer of two alpha and two beta subunits. Requires Mg(2+) as cofactor.

The enzyme catalyses succinate + ATP + CoA = succinyl-CoA + ADP + phosphate. It catalyses the reaction GTP + succinate + CoA = succinyl-CoA + GDP + phosphate. It participates in carbohydrate metabolism; tricarboxylic acid cycle; succinate from succinyl-CoA (ligase route): step 1/1. In terms of biological role, succinyl-CoA synthetase functions in the citric acid cycle (TCA), coupling the hydrolysis of succinyl-CoA to the synthesis of either ATP or GTP and thus represents the only step of substrate-level phosphorylation in the TCA. The beta subunit provides nucleotide specificity of the enzyme and binds the substrate succinate, while the binding sites for coenzyme A and phosphate are found in the alpha subunit. The sequence is that of Succinate--CoA ligase [ADP-forming] subunit beta from Ralstonia pickettii (strain 12J).